Here is a 567-residue protein sequence, read N- to C-terminus: Proline--tRNA ligase (567 aa).

The protein belongs to the class-II aminoacyl-tRNA synthetase family. ProS type 1 subfamily. As to quaternary structure, homodimer.

It localises to the cytoplasm. The catalysed reaction is tRNA(Pro) + L-proline + ATP = L-prolyl-tRNA(Pro) + AMP + diphosphate. Catalyzes the attachment of proline to tRNA(Pro) in a two-step reaction: proline is first activated by ATP to form Pro-AMP and then transferred to the acceptor end of tRNA(Pro). As ProRS can inadvertently accommodate and process non-cognate amino acids such as alanine and cysteine, to avoid such errors it has two additional distinct editing activities against alanine. One activity is designated as 'pretransfer' editing and involves the tRNA(Pro)-independent hydrolysis of activated Ala-AMP. The other activity is designated 'posttransfer' editing and involves deacylation of mischarged Ala-tRNA(Pro). The misacylated Cys-tRNA(Pro) is not edited by ProRS. The sequence is that of Proline--tRNA ligase from Geobacillus kaustophilus (strain HTA426).